We begin with the raw amino-acid sequence, 120 residues long: Large ribosomal subunit protein uL18 (120 aa).

Belongs to the universal ribosomal protein uL18 family. As to quaternary structure, part of the 50S ribosomal subunit; part of the 5S rRNA/L5/L18/L25 subcomplex. Contacts the 5S and 23S rRNAs.

Its function is as follows. This is one of the proteins that bind and probably mediate the attachment of the 5S RNA into the large ribosomal subunit, where it forms part of the central protuberance. In Ehrlichia ruminantium (strain Gardel), this protein is Large ribosomal subunit protein uL18.